Reading from the N-terminus, the 365-residue chain is S-adenosylmethionine:tRNA ribosyltransferase-isomerase (365 aa).

Belongs to the QueA family. Monomer.

Its subcellular location is the cytoplasm. The enzyme catalyses 7-aminomethyl-7-carbaguanosine(34) in tRNA + S-adenosyl-L-methionine = epoxyqueuosine(34) in tRNA + adenine + L-methionine + 2 H(+). Its pathway is tRNA modification; tRNA-queuosine biosynthesis. In terms of biological role, transfers and isomerizes the ribose moiety from AdoMet to the 7-aminomethyl group of 7-deazaguanine (preQ1-tRNA) to give epoxyqueuosine (oQ-tRNA). This chain is S-adenosylmethionine:tRNA ribosyltransferase-isomerase, found in Rickettsia conorii (strain ATCC VR-613 / Malish 7).